A 53-amino-acid polypeptide reads, in one-letter code: Antilisterial bacteriocin subtilosin biosynthesis protein AlbB (53 aa).

2 consecutive transmembrane segments (helical) span residues 8-28 (ILLY…FVKS) and 30-50 (YLFT…ARKA).

It is found in the cell membrane. Involved in the production of the bacteriocin subtilosin. Required for maximal production and for optimal immunity to subtilosin. The sequence is that of Antilisterial bacteriocin subtilosin biosynthesis protein AlbB (albB) from Bacillus subtilis (strain 168).